The chain runs to 356 residues: Protein RecA (356 aa).

68–75 (GQESSGKT) contributes to the ATP binding site.

Belongs to the RecA family.

The protein resides in the cytoplasm. Its function is as follows. Can catalyze the hydrolysis of ATP in the presence of single-stranded DNA, the ATP-dependent uptake of single-stranded DNA by duplex DNA, and the ATP-dependent hybridization of homologous single-stranded DNAs. It interacts with LexA causing its activation and leading to its autocatalytic cleavage. In Thermotoga sp. (strain RQ2), this protein is Protein RecA.